We begin with the raw amino-acid sequence, 71 residues long: Guanine nucleotide-binding protein G(I)/G(S)/G(O) subunit gamma-2 (71 aa).

Position 2 is an N-acetylalanine (Ala2). Cys68 is subject to Cysteine methyl ester. Residue Cys68 is the site of S-geranylgeranyl cysteine attachment. The propeptide at 69–71 is removed in mature form; it reads AIL.

Belongs to the G protein gamma family. As to quaternary structure, g proteins are composed of 3 units, alpha, beta and gamma. In this context, interacts with GNB2. The heterodimer formed by GNB1 and GNG2 interacts with ARHGEF5. The heterodimer formed by GNB1 and GNG2 interacts with GRK2. Component of the TAS2R14-GNAI1 complex, consisting of TAS2R14, GNAI1, GNB1 and GNG2. Forms complexes with TAS2R14 and G-proteins; these complexes play a role in the perception of bitterness. Component of the TAS2R14-GNAT3 complex, consisting of TAS2R14, GNAT3, GNB1 and GNG2. Component of the TAS2R14-GNAS2 complex, consisting of TAS2R14, GNAS2, GNB1 and GNG2. In terms of tissue distribution, adrenal gland and brain.

Its subcellular location is the cell membrane. Its function is as follows. Guanine nucleotide-binding proteins (G proteins) are involved as a modulator or transducer in various transmembrane signaling systems. The beta and gamma chains are required for the GTPase activity, for replacement of GDP by GTP, and for G protein-effector interaction. The chain is Guanine nucleotide-binding protein G(I)/G(S)/G(O) subunit gamma-2 (GNG2) from Bos taurus (Bovine).